We begin with the raw amino-acid sequence, 365 residues long: Protein RecA (365 aa).

81-88 (GPESSGKT) lines the ATP pocket.

The protein belongs to the RecA family.

The protein resides in the cytoplasm. Can catalyze the hydrolysis of ATP in the presence of single-stranded DNA, the ATP-dependent uptake of single-stranded DNA by duplex DNA, and the ATP-dependent hybridization of homologous single-stranded DNAs. It interacts with LexA causing its activation and leading to its autocatalytic cleavage. This Borreliella afzelii (strain PKo) (Borrelia afzelii) protein is Protein RecA.